We begin with the raw amino-acid sequence, 257 residues long: Acetylglutamate kinase (257 aa).

Residues 43–44, arginine 65, and asparagine 157 contribute to the substrate site; that span reads GG. ATP contacts are provided by residues 180-185 and 208-210; these read DVSGIL and IIT.

It belongs to the acetylglutamate kinase family. ArgB subfamily. Homodimer.

Its subcellular location is the cytoplasm. The enzyme catalyses N-acetyl-L-glutamate + ATP = N-acetyl-L-glutamyl 5-phosphate + ADP. The protein operates within amino-acid biosynthesis; L-arginine biosynthesis; N(2)-acetyl-L-ornithine from L-glutamate: step 2/4. In terms of biological role, catalyzes the ATP-dependent phosphorylation of N-acetyl-L-glutamate. This chain is Acetylglutamate kinase, found in Salmonella paratyphi B (strain ATCC BAA-1250 / SPB7).